The following is a 1021-amino-acid chain: Immunoglobulin superfamily member 2 (1021 aa).

The N-terminal stretch at 1–20 (MAGISYVASFFLLLTKLSIG) is a signal peptide. Residues 21-954 (QREVTVQKGP…LPSRICSSAP (934 aa)) lie on the Extracellular side of the membrane. Ig-like C2-type domains lie at 22–139 (REVT…AKTN), 144–265 (PDTL…WMFI), 279–389 (PAVK…RTGS), 408–525 (PAAR…RDLS), 541–651 (LQVS…NSLY), 656–794 (PRAS…WHKL), and 808–925 (PTGS…KWIN). 2 cysteine pairs are disulfide-bonded: Cys43-Cys121 and Cys168-Cys249. Residue Asn44 is glycosylated (N-linked (GlcNAc...) asparagine). Residues 253-255 (EWI) carry the EWI motif motif. 5 cysteine pairs are disulfide-bonded: Cys304–Cys377, Cys434–Cys511, Cys562–Cys640, Cys697–Cys778, and Cys834–Cys909. Asn322 carries N-linked (GlcNAc...) asparagine glycosylation. Residues 955 to 975 (LLYFLFICPFVLLLLLLISLL) traverse the membrane as a helical segment. Over 976–1021 (CLYWKARKLSTLRSNTRKEKALWVDLKEAGGVTTNRREDEEEDEGN) the chain is Cytoplasmic.

In terms of processing, N-glycosylated. As to expression, expressed in lung, thymus and small intestine. Detected in cutaneous dendritic cells, activated T-cells, monocytes and granulocytes as well as with epithelial cells with dendritic morphology. Expressed in some leukemic cells, the CD4(+) CD56(+) blastic tumor cells, as well as in Langerhans cells from LCH (Langerhans cell histiocytosis) patients.

It localises to the membrane. In terms of biological role, plays a role as inhibitor of T-cells proliferation induced by CD3. Inhibits expression of IL2RA on activated T-cells and secretion of IL2. Inhibits tyrosine kinases that are required for IL2 production and cellular proliferation. Inhibits phospholipase C-gamma-1/PLCG1 phosphorylation and subsequent CD3-induced changes in intracellular free calcium. Prevents nuclear translocation of nuclear factor of activated T-cell to the nucleus. Plays a role in the inhibition of T-cell proliferation via IL10 secretion by cutaneous dendritic cells. May be a marker of CD4(+) CD56(+) leukemic tumor cells. This is Immunoglobulin superfamily member 2 (CD101) from Homo sapiens (Human).